The following is a 471-amino-acid chain: Glutamate--tRNA ligase (471 aa).

The 'HIGH' region motif lies at 9 to 19; the sequence is PSPTGYLHVGG. Residues 237–241 carry the 'KMSKS' region motif; sequence KLSKR. Lysine 240 lines the ATP pocket.

The protein belongs to the class-I aminoacyl-tRNA synthetase family. Glutamate--tRNA ligase type 1 subfamily. As to quaternary structure, monomer.

It localises to the cytoplasm. It catalyses the reaction tRNA(Glu) + L-glutamate + ATP = L-glutamyl-tRNA(Glu) + AMP + diphosphate. Its function is as follows. Catalyzes the attachment of glutamate to tRNA(Glu) in a two-step reaction: glutamate is first activated by ATP to form Glu-AMP and then transferred to the acceptor end of tRNA(Glu). This is Glutamate--tRNA ligase from Pectobacterium atrosepticum (strain SCRI 1043 / ATCC BAA-672) (Erwinia carotovora subsp. atroseptica).